The following is a 381-amino-acid chain: Protein-glutamate methylesterase/protein-glutamine glutaminase 1 (381 aa).

The Response regulatory domain maps to 14-132 (RVMLVDDSAV…DLAGGVDFKS (119 aa)). Asp-65 is modified (4-aspartylphosphate). Residues 143 to 173 (QARRAGARPARPGGPPATRPVIASTSPRTPV) are disordered. The segment covering 144–153 (ARRAGARPAR) has biased composition (low complexity). The CheB-type methylesterase domain maps to 188-381 (PEPPDIIAIG…PWIMKLAARR (194 aa)). Residues Ser-199, His-227, and Asp-323 contribute to the active site.

It belongs to the CheB family. In terms of processing, phosphorylated by CheA. Phosphorylation of the N-terminal regulatory domain activates the methylesterase activity.

It localises to the cytoplasm. The enzyme catalyses [protein]-L-glutamate 5-O-methyl ester + H2O = L-glutamyl-[protein] + methanol + H(+). It carries out the reaction L-glutaminyl-[protein] + H2O = L-glutamyl-[protein] + NH4(+). Its function is as follows. Involved in chemotaxis. Part of a chemotaxis signal transduction system that modulates chemotaxis in response to various stimuli. Catalyzes the demethylation of specific methylglutamate residues introduced into the chemoreceptors (methyl-accepting chemotaxis proteins or MCP) by CheR. Also mediates the irreversible deamidation of specific glutamine residues to glutamic acid. This Paramagnetospirillum magneticum (strain ATCC 700264 / AMB-1) (Magnetospirillum magneticum) protein is Protein-glutamate methylesterase/protein-glutamine glutaminase 1.